The primary structure comprises 185 residues: uncharacterized protein (185 aa).

This is an uncharacterized protein from Alkalihalophilus pseudofirmus (strain ATCC BAA-2126 / JCM 17055 / OF4) (Bacillus pseudofirmus).